A 346-amino-acid chain; its full sequence is GTP-binding RHO-like protein (346 aa).

Residues 1 to 10 (MTPNGSRRHS) show a composition bias toward basic residues. Residues 1–25 (MTPNGSRRHSAYMGSPRSQHSSTME) are disordered. The span at 16 to 25 (PRSQHSSTME) shows a compositional bias: polar residues. Residue 82-89 (GDGGCGKT) participates in GTP binding. The Effector region signature appears at 104–112 (YVPTVFENY). GTP contacts are provided by residues 130–134 (DTAGQ) and 188–191 (TKSD). Residues 259–294 (LGGSNGGSGNHSRHHSRNYSNVSNNRRGHLKNTSYD) are disordered. Cysteine 343 bears the Cysteine methyl ester mark. Residue cysteine 343 is the site of S-geranylgeranyl cysteine attachment. Positions 344-346 (VIL) are cleaved as a propeptide — removed in mature form.

It belongs to the small GTPase superfamily. Rho family.

Its subcellular location is the cell membrane. The chain is GTP-binding RHO-like protein (CRL1) from Candida albicans (strain WO-1) (Yeast).